Consider the following 128-residue polypeptide: Keratin-associated protein 2-3 (128 aa).

The interval 5 to 112 (CCGSTLSSLS…SVQSPCCRPP (108 aa)) is 10 X 5 AA repeats of C-C-[CDPQRWG]-[APRS]-[CIPSTVD].

It belongs to the KRTAP type 2 family. In terms of assembly, interacts with hair keratins.

Functionally, in the hair cortex, hair keratin intermediate filaments are embedded in an interfilamentous matrix, consisting of hair keratin-associated proteins (KRTAP), which are essential for the formation of a rigid and resistant hair shaft through their extensive disulfide bond cross-linking with abundant cysteine residues of hair keratins. The matrix proteins include the high-sulfur and high-glycine-tyrosine keratins. The sequence is that of Keratin-associated protein 2-3 (KRTAP2-3) from Homo sapiens (Human).